The sequence spans 117 residues: MILYVLPTSLSLCLLLMIIYLLTANLFKFASYELKTPFECGFDPLSNMRSPMTTRFFILTVLFLIFDVEVVLLFPVLSMVSFMTSPLIIMSIILFMMVLLIGLLYEMYYGVLDWVLN.

The next 3 membrane-spanning stretches (helical) occupy residues 2–22 (ILYV…IYLL), 56–76 (FFIL…LFPV), and 85–105 (SPLI…GLLY).

It belongs to the complex I subunit 3 family.

It localises to the mitochondrion membrane. It carries out the reaction a ubiquinone + NADH + 5 H(+)(in) = a ubiquinol + NAD(+) + 4 H(+)(out). In terms of biological role, core subunit of the mitochondrial membrane respiratory chain NADH dehydrogenase (Complex I) that is believed to belong to the minimal assembly required for catalysis. Complex I functions in the transfer of electrons from NADH to the respiratory chain. The immediate electron acceptor for the enzyme is believed to be ubiquinone. The protein is NADH-ubiquinone oxidoreductase chain 3 (ND3) of Albinaria caerulea (Land snail).